We begin with the raw amino-acid sequence, 175 residues long: 6,7-dimethyl-8-ribityllumazine synthase (175 aa).

Residues Phe-24, 58-60 (ALE), and 82-84 (AVI) contribute to the 5-amino-6-(D-ribitylamino)uracil site. A (2S)-2-hydroxy-3-oxobutyl phosphate-binding site is contributed by 87-88 (ET). His-90 (proton donor) is an active-site residue. Asn-115 lines the 5-amino-6-(D-ribitylamino)uracil pocket. Arg-129 serves as a coordination point for (2S)-2-hydroxy-3-oxobutyl phosphate. The interval 151 to 175 (LEPEEDDEDEDEEDEDFDDEETDRR) is disordered. Residues 152–175 (EPEEDDEDEDEEDEDFDDEETDRR) are compositionally biased toward acidic residues.

It belongs to the DMRL synthase family.

It carries out the reaction (2S)-2-hydroxy-3-oxobutyl phosphate + 5-amino-6-(D-ribitylamino)uracil = 6,7-dimethyl-8-(1-D-ribityl)lumazine + phosphate + 2 H2O + H(+). The protein operates within cofactor biosynthesis; riboflavin biosynthesis; riboflavin from 2-hydroxy-3-oxobutyl phosphate and 5-amino-6-(D-ribitylamino)uracil: step 1/2. In terms of biological role, catalyzes the formation of 6,7-dimethyl-8-ribityllumazine by condensation of 5-amino-6-(D-ribitylamino)uracil with 3,4-dihydroxy-2-butanone 4-phosphate. This is the penultimate step in the biosynthesis of riboflavin. This is 6,7-dimethyl-8-ribityllumazine synthase from Bordetella petrii (strain ATCC BAA-461 / DSM 12804 / CCUG 43448).